The chain runs to 276 residues: Urease accessory protein UreD (276 aa).

The protein belongs to the UreD family. In terms of assembly, ureD, UreF and UreG form a complex that acts as a GTP-hydrolysis-dependent molecular chaperone, activating the urease apoprotein by helping to assemble the nickel containing metallocenter of UreC. The UreE protein probably delivers the nickel.

The protein localises to the cytoplasm. Functionally, required for maturation of urease via the functional incorporation of the urease nickel metallocenter. This chain is Urease accessory protein UreD, found in Variovorax paradoxus (strain S110).